The sequence spans 449 residues: MFS-type transporter hasB (449 aa).

12 helical membrane passes run 44 to 64 (VAGS…CGIF), 80 to 100 (ALAW…PAVG), 112 to 132 (LPPF…CTKY), 135 to 155 (VMLA…LPAM), 168 to 188 (LAVG…PCML), 195 to 215 (VGFA…LFIA), 255 to 275 (LPWG…FAPL), 296 to 316 (AIAN…SDII), 322 to 342 (MCIV…PLEF), 346 to 366 (LAGI…FVSL), 387 to 407 (GGFC…EGAI), and 415 to 435 (FTGL…CTGT).

This sequence belongs to the major facilitator superfamily. Monocarboxylate porter (TC 2.A.1.13) family.

It localises to the membrane. Functionally, MFS-type transporter; part of the gene cluster that mediates the biosynthesis of hexadehydro-astechrome (HAS), a tryptophan-derived iron(III)-complex that acts as a virulence factor in infected mice. Required for the production of HAS. The polypeptide is MFS-type transporter hasB (Aspergillus fumigatus (strain CBS 144.89 / FGSC A1163 / CEA10) (Neosartorya fumigata)).